The sequence spans 237 residues: Dihydroceramide fatty acyl 2-hydroxylase FAH1 (237 aa).

A run of 2 helical transmembrane segments spans residues 50–70 (LTLT…VWCI) and 80–100 (LPEI…FEYV). His-102, His-107, His-123, His-126, and His-127 together coordinate Zn(2+). The next 2 helical transmembrane spans lie at 137–157 (VFPP…AKAI) and 164–184 (PALF…HYYL). Residues His-181, His-185, His-201, His-204, and His-205 each coordinate Zn(2+).

The protein belongs to the sterol desaturase family. In terms of assembly, interacts with CYTB5-A, CYTB5-B, CYTB5-C and CYTB5-D. Interacts indirectly with BI-1 via CYTB5-D. Zn(2+) is required as a cofactor. In terms of tissue distribution, expressed in leaves, roots, flowers and seeds.

It is found in the endoplasmic reticulum membrane. The enzyme catalyses an N-(1,2-saturated acyl)sphinganine + 2 Fe(II)-[cytochrome b5] + O2 + 2 H(+) = an N-[(2'R)-hydroxyacyl]sphinganine + 2 Fe(III)-[cytochrome b5] + H2O. In terms of biological role, fatty acid 2-hydroxylase involved in the alpha-hydroxylation of sphingolipid-associated very long-chain fatty acids (VLCFA). Probably involved in the resistance response to oxidative stress. The chain is Dihydroceramide fatty acyl 2-hydroxylase FAH1 from Arabidopsis thaliana (Mouse-ear cress).